The sequence spans 164 residues: SsrA-binding protein (164 aa).

This sequence belongs to the SmpB family.

It is found in the cytoplasm. Functionally, required for rescue of stalled ribosomes mediated by trans-translation. Binds to transfer-messenger RNA (tmRNA), required for stable association of tmRNA with ribosomes. tmRNA and SmpB together mimic tRNA shape, replacing the anticodon stem-loop with SmpB. tmRNA is encoded by the ssrA gene; the 2 termini fold to resemble tRNA(Ala) and it encodes a 'tag peptide', a short internal open reading frame. During trans-translation Ala-aminoacylated tmRNA acts like a tRNA, entering the A-site of stalled ribosomes, displacing the stalled mRNA. The ribosome then switches to translate the ORF on the tmRNA; the nascent peptide is terminated with the 'tag peptide' encoded by the tmRNA and targeted for degradation. The ribosome is freed to recommence translation, which seems to be the essential function of trans-translation. This is SsrA-binding protein from Corynebacterium glutamicum (strain R).